Consider the following 358-residue polypeptide: MRKINFSAGPSTLPLEILEQAQKELCDYQGRGYSIMEISHRTKVFEEVHFGAQEKAKKLYGLNDDYEVLFLQGGASLQFAMIPMNLALNGICEYANTGVWTKKAIKEAQILGVNVKTVASSEESNFNHIPRVEFRDNADYAYICSNNTIYGTQYQNYPKTKTPLIVDASSDFFSRKVDFSNIALFYGGVQKNAGISGLSCIFIRKDMLERSKNKQIPSMLNYLTHAENQSLFNTPPTFAIYMFILEMDWLLNQGGLDKVHEKNSQKAAMLYECIDLSNGFYKGHADKKDRSLMNVSFNIAKNKDLEPLFVKEAEEAGMIGLKGHRILGGIRASIYNALNLDQVKTLCEFMKEFQGKYA.

R41 lines the L-glutamate pocket. Pyridoxal 5'-phosphate contacts are provided by residues 75–76 (AS), W100, T148, D167, and Q190. An N6-(pyridoxal phosphate)lysine modification is found at K191. A pyridoxal 5'-phosphate-binding site is contributed by 233–234 (NT).

The protein belongs to the class-V pyridoxal-phosphate-dependent aminotransferase family. SerC subfamily. Homodimer. It depends on pyridoxal 5'-phosphate as a cofactor.

It localises to the cytoplasm. It catalyses the reaction O-phospho-L-serine + 2-oxoglutarate = 3-phosphooxypyruvate + L-glutamate. The catalysed reaction is 4-(phosphooxy)-L-threonine + 2-oxoglutarate = (R)-3-hydroxy-2-oxo-4-phosphooxybutanoate + L-glutamate. Its pathway is amino-acid biosynthesis; L-serine biosynthesis; L-serine from 3-phospho-D-glycerate: step 2/3. It participates in cofactor biosynthesis; pyridoxine 5'-phosphate biosynthesis; pyridoxine 5'-phosphate from D-erythrose 4-phosphate: step 3/5. Functionally, catalyzes the reversible conversion of 3-phosphohydroxypyruvate to phosphoserine and of 3-hydroxy-2-oxo-4-phosphonooxybutanoate to phosphohydroxythreonine. This Campylobacter jejuni (strain RM1221) protein is Phosphoserine aminotransferase.